A 101-amino-acid chain; its full sequence is Conopressin/conophysin, isoform 3 (101 aa).

A signal peptide is located at residue Ala-1. Cys-2 and Cys-7 are oxidised to a cystine. Residue Gly-10 is modified to Glycine amide. Positions 11–18 (GKRNVDEG) are excised as a propeptide. 7 disulfide bridges follow: Cys-23–Cys-63, Cys-26–Cys-37, Cys-31–Cys-53, Cys-38–Cys-43, Cys-70–Cys-88, Cys-82–Cys-100, and Cys-89–Cys-94.

This sequence belongs to the vasopressin/oxytocin family. In terms of tissue distribution, expressed by the venom gland.

It is found in the secreted. Its function is as follows. Targets vasopressin-oxytocin related receptors. Is more active on fish receptors than on their human counterparts, supporting an evolved role of this conopressin in the envenomation process. Acts as an agonist on zebrafish vasopressin receptors V1a1R (EC(50)=10.6 nM), V1a2R (EC(50)=44.06 nM, partial agonist), V2R (EC(50)=299.2 nM) and oxytocin receptor (EC(50)=353.73 nM, partial agonist). Shows a weaker activity on human receptors AVPR1B (EC(50)=51.92 nM), AVPR1A (EC(50)=123.78 nM), AVPR2 (EC(50)=299.2 nM) and oxytocin (OXTR) receptor (EC(50)=455.66 nM, partial agonist). In vivo, exhibits grooming and scratching behavior in mice, following intracerebral injection. This Conus monile (Necklace cone) protein is Conopressin/conophysin, isoform 3.